Here is a 332-residue protein sequence, read N- to C-terminus: NADH-quinone oxidoreductase subunit H (332 aa).

9 consecutive transmembrane segments (helical) span residues 4 to 24 (FAFF…IFAS), 44 to 64 (IGPD…MIKL), 78 to 98 (FIFA…LAAI), 120 to 140 (VALL…FLGG), 165 to 185 (VGAL…LVDI), 194 to 214 (FSWL…ALFI), 255 to 275 (IAGA…FWII), 279 to 299 (IMMI…RAAF), and 312 to 332 (YLIL…TVLL).

It belongs to the complex I subunit 1 family. In terms of assembly, NDH-1 is composed of 14 different subunits. Subunits NuoA, H, J, K, L, M, N constitute the membrane sector of the complex.

It localises to the cell inner membrane. It catalyses the reaction a quinone + NADH + 5 H(+)(in) = a quinol + NAD(+) + 4 H(+)(out). NDH-1 shuttles electrons from NADH, via FMN and iron-sulfur (Fe-S) centers, to quinones in the respiratory chain. The immediate electron acceptor for the enzyme in this species is believed to be ubiquinone. Couples the redox reaction to proton translocation (for every two electrons transferred, four hydrogen ions are translocated across the cytoplasmic membrane), and thus conserves the redox energy in a proton gradient. This subunit may bind ubiquinone. The protein is NADH-quinone oxidoreductase subunit H of Campylobacter jejuni subsp. jejuni serotype O:2 (strain ATCC 700819 / NCTC 11168).